Here is a 554-residue protein sequence, read N- to C-terminus: Myo-inositol transporter 1 (554 aa).

The segment covering 1–13 has biased composition (polar residues); the sequence is MGSSTNNTQSKAT. Positions 1–57 are disordered; the sequence is MGSSTNNTQSKATPSVLENEVNSSKSSVVSSTSSAKGLLRETTNHGTMETSSVQISE. 2 N-linked (GlcNAc...) asparagine glycosylation sites follow: Asn-6 and Asn-22. Low complexity predominate over residues 15–34; the sequence is SVLENEVNSSKSSVVSSTSS. Residues 44 to 57 are compositionally biased toward polar residues; the sequence is NHGTMETSSVQISE. 6 consecutive transmembrane segments (helical) span residues 65–85, 110–130, 144–164, 167–187, 196–216, and 227–247; these read MVLVLTLASSISGFMFGYDTG, FITSATSLGALLGAVVGGVLA, IIFVVGTIIQLAARTVWTMIA, FVLGWGVGIASLIAPLMISEL, LIVTNVIFITGGQLIAYFINW, and VSVGLCMVPPVLQFVLFWFLP. Asn-279 carries an N-linked (GlcNAc...) asparagine glycan. Residues 313–332 form a helical membrane-spanning segment; the sequence is GNFRALILACGLQGIQQFTG. Asn-351 carries N-linked (GlcNAc...) asparagine glycosylation. 5 consecutive transmembrane segments (helical) span residues 354–374, 382–402, 420–440, 459–479, and 490–510; these read AVSIIIAATNFVFTGIAICII, ILLVGMPCMCISLIVCAVAFH, GWGIVVIIGMILYVASYAIGI, IGAMYAACTNWAGSLVIASTF, and GTFSFFAGLCFIAFFFVYFLL.

It belongs to the major facilitator superfamily. Sugar transporter (TC 2.A.1.1) family.

It is found in the cell membrane. The enzyme catalyses myo-inositol(out) + H(+)(out) = myo-inositol(in) + H(+)(in). Major transporter for myo-inositol. In Candida albicans (strain SC5314 / ATCC MYA-2876) (Yeast), this protein is Myo-inositol transporter 1.